The following is a 153-amino-acid chain: Penitrem biosynthesis cluster 1 protein I (153 aa).

Its pathway is secondary metabolite biosynthesis. Its function is as follows. Part of the gene cluster that mediates the biosynthesis of the indole diterpenes penitrems. The geranylgeranyl diphosphate (GGPP) synthase ptmG catalyzes the first step in penitrem biosynthesis via conversion of farnesyl pyrophosphate and isopentyl pyrophosphate into geranylgeranyl pyrophosphate (GGPP). Condensation of indole-3-glycerol phosphate with GGPP by the prenyl transferase ptmC then forms 3-geranylgeranylindole (3-GGI). Epoxidation by the FAD-dependent monooxygenase ptmM leads to a epoxidized-GGI that is substrate of the terpene cyclase ptmB for cyclization to yield paspaline. Paspaline is subsequently converted to 13-desoxypaxilline by the cytochrome P450 monooxygenase ptmP, the latter being then converted to paxilline by the cytochrome P450 monooxygenase ptmQ. Paxilline is converted to beta-paxitriol via C-10 ketoreduction by the short-chain dehydrogenase ptmH which can be monoprenylated at the C-20 by the indole diterpene prenyltransferase ptmD. A two-step elimination (acetylation and elimination) process performed by the O-acetyltransferase ptmV and ptmI leads to the production of the prenylated form of penijanthine. The FAD-linked oxidoreductase ptmO then converts the prenylated form of penijanthine into PC-M5 which is in turn transformed into PC-M4 by the aromatic dimethylallyltransferase ptmE. Five sequential oxidative transformations performed by the cytochrome P450 monooxygenases ptmK, ptmU, ptmL, ptmN and ptmJ yield the various penitrem compounds. PtmK, ptmU and ptmM are involved in the formation of the key bicyclic ring of penitrem C via the formation of the intermediates secopenitrem D and penitrem D. PtmL catalyzes the epoxidation of penitrem D and C to yield penitrem B and F, respectively. PtmJ catalyzes the last benzylic hydroxylation to convert penitrem B to prenitrem E and penitrem F to penitrem A. The sequence is that of Penitrem biosynthesis cluster 1 protein I from Penicillium ochrochloron.